Consider the following 320-residue polypeptide: o-succinylbenzoate synthase (320 aa).

The active-site Proton donor is Lys-133. Residues Asp-161, Glu-190, and Asp-213 each contribute to the Mg(2+) site. The active-site Proton acceptor is Lys-235.

The protein belongs to the mandelate racemase/muconate lactonizing enzyme family. MenC type 1 subfamily. It depends on a divalent metal cation as a cofactor.

It catalyses the reaction (1R,6R)-6-hydroxy-2-succinyl-cyclohexa-2,4-diene-1-carboxylate = 2-succinylbenzoate + H2O. It participates in quinol/quinone metabolism; 1,4-dihydroxy-2-naphthoate biosynthesis; 1,4-dihydroxy-2-naphthoate from chorismate: step 4/7. It functions in the pathway quinol/quinone metabolism; menaquinone biosynthesis. Functionally, converts 2-succinyl-6-hydroxy-2,4-cyclohexadiene-1-carboxylate (SHCHC) to 2-succinylbenzoate (OSB). The sequence is that of o-succinylbenzoate synthase from Salmonella newport (strain SL254).